We begin with the raw amino-acid sequence, 446 residues long: Exodeoxyribonuclease 7 large subunit (446 aa).

The protein belongs to the XseA family. In terms of assembly, heterooligomer composed of large and small subunits.

The protein resides in the cytoplasm. The catalysed reaction is Exonucleolytic cleavage in either 5'- to 3'- or 3'- to 5'-direction to yield nucleoside 5'-phosphates.. Functionally, bidirectionally degrades single-stranded DNA into large acid-insoluble oligonucleotides, which are then degraded further into small acid-soluble oligonucleotides. The sequence is that of Exodeoxyribonuclease 7 large subunit from Streptococcus pneumoniae (strain ATCC 700669 / Spain 23F-1).